Reading from the N-terminus, the 465-residue chain is UDP-N-acetylmuramoylalanine--D-glutamate ligase (465 aa).

127 to 133 contributes to the ATP binding site; it reads GSNGKST.

The protein belongs to the MurCDEF family.

It localises to the cytoplasm. It carries out the reaction UDP-N-acetyl-alpha-D-muramoyl-L-alanine + D-glutamate + ATP = UDP-N-acetyl-alpha-D-muramoyl-L-alanyl-D-glutamate + ADP + phosphate + H(+). It functions in the pathway cell wall biogenesis; peptidoglycan biosynthesis. Its function is as follows. Cell wall formation. Catalyzes the addition of glutamate to the nucleotide precursor UDP-N-acetylmuramoyl-L-alanine (UMA). The chain is UDP-N-acetylmuramoylalanine--D-glutamate ligase from Cereibacter sphaeroides (strain KD131 / KCTC 12085) (Rhodobacter sphaeroides).